Reading from the N-terminus, the 201-residue chain is Proteasome subunit beta 1 (201 aa).

The propeptide at 1-10 (MNGSPSAMKG) is removed in mature form; by autocatalysis. T11 functions as the Nucleophile in the catalytic mechanism.

The protein belongs to the peptidase T1B family. As to quaternary structure, the 20S proteasome core is composed of 14 alpha and 14 beta subunits that assemble into four stacked heptameric rings, resulting in a barrel-shaped structure. The two inner rings, each composed of seven catalytic beta subunits, are sandwiched by two outer rings, each composed of seven alpha subunits. The catalytic chamber with the active sites is on the inside of the barrel. Has a gated structure, the ends of the cylinder being occluded by the N-termini of the alpha-subunits. Is capped at one or both ends by the proteasome regulatory ATPase, PAN.

The protein resides in the cytoplasm. The enzyme catalyses Cleavage of peptide bonds with very broad specificity.. With respect to regulation, the formation of the proteasomal ATPase PAN-20S proteasome complex, via the docking of the C-termini of PAN into the intersubunit pockets in the alpha-rings, triggers opening of the gate for substrate entry. Interconversion between the open-gate and close-gate conformations leads to a dynamic regulation of the 20S proteasome proteolysis activity. In terms of biological role, component of the proteasome core, a large protease complex with broad specificity involved in protein degradation. This is Proteasome subunit beta 1 from Thermococcus gammatolerans (strain DSM 15229 / JCM 11827 / EJ3).